Reading from the N-terminus, the 583-residue chain is ATP-dependent lipid A-core flippase (583 aa).

5 helical membrane-spanning segments follow: residues 27 to 47, 69 to 89, 142 to 162, 165 to 185, and 249 to 269; these read LAVA…MVSL, LLVF…TYCL, ALVS…LMFY, WQLS…IGFV, and AAAN…VLYL. In terms of domain architecture, ABC transmembrane type-1 spans 28-310; the sequence is AVAVVALIIN…LTNVTSQFQR (283 aa). Positions 342–578 constitute an ABC transporter domain; that stretch reads VNVKDISFTY…DGAYAQLHRI (237 aa). Position 376-383 (376-383) interacts with ATP; that stretch reads GRSGSGKS.

The protein belongs to the ABC transporter superfamily. Lipid exporter (TC 3.A.1.106) family. Homodimer.

The protein localises to the cell inner membrane. The enzyme catalyses ATP + H2O + lipid A-core oligosaccharideSide 1 = ADP + phosphate + lipid A-core oligosaccharideSide 2.. Functionally, involved in lipopolysaccharide (LPS) biosynthesis. Translocates lipid A-core from the inner to the outer leaflet of the inner membrane. Transmembrane domains (TMD) form a pore in the inner membrane and the ATP-binding domain (NBD) is responsible for energy generation. This chain is ATP-dependent lipid A-core flippase, found in Vibrio vulnificus (strain YJ016).